Reading from the N-terminus, the 438-residue chain is 3-phosphoshikimate 1-carboxyvinyltransferase (438 aa).

Residues Lys25, Ser26, and Arg30 each contribute to the 3-phosphoshikimate site. Lys25 contributes to the phosphoenolpyruvate binding site. Positions 99 and 128 each coordinate phosphoenolpyruvate. 4 residues coordinate 3-phosphoshikimate: Ser173, Gln175, Asp325, and Lys352. Gln175 is a phosphoenolpyruvate binding site. The active-site Proton acceptor is the Asp325. Phosphoenolpyruvate contacts are provided by Arg356 and Arg398.

This sequence belongs to the EPSP synthase family. In terms of assembly, monomer.

Its subcellular location is the cytoplasm. The catalysed reaction is 3-phosphoshikimate + phosphoenolpyruvate = 5-O-(1-carboxyvinyl)-3-phosphoshikimate + phosphate. It participates in metabolic intermediate biosynthesis; chorismate biosynthesis; chorismate from D-erythrose 4-phosphate and phosphoenolpyruvate: step 6/7. Its function is as follows. Catalyzes the transfer of the enolpyruvyl moiety of phosphoenolpyruvate (PEP) to the 5-hydroxyl of shikimate-3-phosphate (S3P) to produce enolpyruvyl shikimate-3-phosphate and inorganic phosphate. This Prochlorococcus marinus subsp. pastoris (strain CCMP1986 / NIES-2087 / MED4) protein is 3-phosphoshikimate 1-carboxyvinyltransferase.